A 626-amino-acid chain; its full sequence is Methanol dehydrogenase [cytochrome c] subunit 1 (626 aa).

The N-terminal stretch at 1–27 is a signal peptide; sequence MSRFVTSVSALAMLALAPAALSSVAYA. The cysteines at positions 130 and 131 are disulfide-linked. Residues E204 and N288 each contribute to the Ca(2+) site. D330 serves as the catalytic Proton acceptor. A disulfide bridge connects residues C413 and C442.

The protein belongs to the bacterial PQQ dehydrogenase family. Heterotetramer composed of 2 alpha and 2 beta subunits. Pyrroloquinoline quinone is required as a cofactor. Ca(2+) serves as cofactor.

The protein localises to the cell inner membrane. It catalyses the reaction 2 Fe(III)-[cytochrome cL] + a primary alcohol = 2 Fe(II)-[cytochrome cL] + an aldehyde + 2 H(+). In terms of biological role, catalyzes the oxidation of primary alcohols including methanol. This Methylobacterium organophilum protein is Methanol dehydrogenase [cytochrome c] subunit 1 (moxF).